A 178-amino-acid chain; its full sequence is Large ribosomal subunit protein uL6 (178 aa).

This sequence belongs to the universal ribosomal protein uL6 family. Part of the 50S ribosomal subunit.

In terms of biological role, this protein binds to the 23S rRNA, and is important in its secondary structure. It is located near the subunit interface in the base of the L7/L12 stalk, and near the tRNA binding site of the peptidyltransferase center. This is Large ribosomal subunit protein uL6 from Corynebacterium kroppenstedtii (strain DSM 44385 / JCM 11950 / CIP 105744 / CCUG 35717).